A 371-amino-acid polypeptide reads, in one-letter code: tRNA-specific 2-thiouridylase MnmA (371 aa).

ATP-binding positions include Gly13 to Ser20 and Met39. The segment at Asn99–Asp101 is interaction with target base in tRNA. Residue Cys104 is the Nucleophile of the active site. A disulfide bridge connects residues Cys104 and Cys200. Gly128 serves as a coordination point for ATP. Residues Lys150 to Gln152 form an interaction with tRNA region. Catalysis depends on Cys200, which acts as the Cysteine persulfide intermediate. The tract at residues Arg308 to Tyr309 is interaction with tRNA.

Belongs to the MnmA/TRMU family.

The protein localises to the cytoplasm. The enzyme catalyses S-sulfanyl-L-cysteinyl-[protein] + uridine(34) in tRNA + AH2 + ATP = 2-thiouridine(34) in tRNA + L-cysteinyl-[protein] + A + AMP + diphosphate + H(+). Its function is as follows. Catalyzes the 2-thiolation of uridine at the wobble position (U34) of tRNA, leading to the formation of s(2)U34. This chain is tRNA-specific 2-thiouridylase MnmA, found in Bacillus thuringiensis (strain Al Hakam).